The chain runs to 451 residues: mRNA cleavage and polyadenylation factor CLP1 (451 aa).

ATP is bound by residues Glu33, Lys72, and 133–138; that span reads NTGKTA.

It belongs to the Clp1 family. Clp1 subfamily. Component of a pre-mRNA cleavage factor complex. Interacts directly with PCF11.

Its subcellular location is the nucleus. Its function is as follows. Required for endonucleolytic cleavage during polyadenylation-dependent pre-mRNA 3'-end formation. In Vanderwaltozyma polyspora (strain ATCC 22028 / DSM 70294 / BCRC 21397 / CBS 2163 / NBRC 10782 / NRRL Y-8283 / UCD 57-17) (Kluyveromyces polysporus), this protein is mRNA cleavage and polyadenylation factor CLP1.